The chain runs to 143 residues: Transcription antitermination protein NusB (143 aa).

This sequence belongs to the NusB family.

Involved in transcription antitermination. Required for transcription of ribosomal RNA (rRNA) genes. Binds specifically to the boxA antiterminator sequence of the ribosomal RNA (rrn) operons. This Buchnera aphidicola subsp. Acyrthosiphon pisum (strain APS) (Acyrthosiphon pisum symbiotic bacterium) protein is Transcription antitermination protein NusB.